A 107-amino-acid chain; its full sequence is U1-lycotoxin-Ls1n (107 aa).

The N-terminal stretch at Met1–Ser20 is a signal peptide. Positions Glu21 to Arg41 are excised as a propeptide. 4 cysteine pairs are disulfide-bonded: Cys44/Cys59, Cys51/Cys68, Cys58/Cys86, and Cys70/Cys84.

Belongs to the neurotoxin 19 (CSTX) family. 04 (U1-Lctx) subfamily. In terms of tissue distribution, expressed by the venom gland.

Its subcellular location is the secreted. This is U1-lycotoxin-Ls1n from Lycosa singoriensis (Wolf spider).